Consider the following 313-residue polypeptide: Porphobilinogen deaminase (313 aa).

C242 bears the S-(dipyrrolylmethanemethyl)cysteine mark.

This sequence belongs to the HMBS family. In terms of assembly, monomer. It depends on dipyrromethane as a cofactor.

It carries out the reaction 4 porphobilinogen + H2O = hydroxymethylbilane + 4 NH4(+). Its pathway is porphyrin-containing compound metabolism; protoporphyrin-IX biosynthesis; coproporphyrinogen-III from 5-aminolevulinate: step 2/4. In terms of biological role, tetrapolymerization of the monopyrrole PBG into the hydroxymethylbilane pre-uroporphyrinogen in several discrete steps. In Pectobacterium atrosepticum (strain SCRI 1043 / ATCC BAA-672) (Erwinia carotovora subsp. atroseptica), this protein is Porphobilinogen deaminase.